The following is a 256-amino-acid chain: Anamorsin homolog (256 aa).

Positions 1–136 (MNSLSLELNK…DTNESSTINI (136 aa)) are N-terminal SAM-like domain. Residues 126–148 (WDTNESSTINIPSTSSNNPWASI) are disordered. Positions 131–144 (SSTINIPSTSSNNP) are enriched in low complexity. Residues 137-166 (PSTSSNNPWASIEGGDRINENDLVSENDKT) are linker. The [2Fe-2S] cluster site is built by Cys176, Cys185, Cys188, and Cys190. Residues 176–190 (CEVGKTKKACKNCTC) are fe-S binding site A. [4Fe-4S] cluster is bound by residues Cys217, Cys220, Cys228, and Cys231. 2 consecutive short sequence motifs (cx2C motif) follow at residues 217–220 (CGNC) and 228–231 (CGGC). Residues 217 to 231 (CGNCSLGDAFRCGGC) are fe-S binding site B.

The protein belongs to the anamorsin family. Monomer. It depends on [2Fe-2S] cluster as a cofactor. Requires [4Fe-4S] cluster as cofactor.

Its subcellular location is the cytoplasm. It is found in the mitochondrion intermembrane space. In terms of biological role, component of the cytosolic iron-sulfur (Fe-S) protein assembly (CIA) machinery. Required for the maturation of extramitochondrial Fe-S proteins. Part of an electron transfer chain functioning in an early step of cytosolic Fe-S biogenesis, facilitating the de novo assembly of a [4Fe-4S] cluster on the cytosolic Fe-S scaffold complex. Electrons are transferred from NADPH via a FAD- and FMN-containing diflavin oxidoreductase. Together with the diflavin oxidoreductase, also required for the assembly of the diferric tyrosyl radical cofactor of ribonucleotide reductase (RNR), probably by providing electrons for reduction during radical cofactor maturation in the catalytic small subunit. The chain is Anamorsin homolog (rsc43) from Dictyostelium discoideum (Social amoeba).